Reading from the N-terminus, the 292-residue chain is 33 kDa chaperonin (292 aa).

2 disulfide bridges follow: C230–C232 and C263–C266.

The protein belongs to the HSP33 family. In terms of processing, under oxidizing conditions two disulfide bonds are formed involving the reactive cysteines. Under reducing conditions zinc is bound to the reactive cysteines and the protein is inactive.

Its subcellular location is the cytoplasm. Its function is as follows. Redox regulated molecular chaperone. Protects both thermally unfolding and oxidatively damaged proteins from irreversible aggregation. Plays an important role in the bacterial defense system toward oxidative stress. The sequence is that of 33 kDa chaperonin from Salmonella paratyphi A (strain ATCC 9150 / SARB42).